The primary structure comprises 506 residues: Proline--tRNA ligase (506 aa).

The protein belongs to the class-II aminoacyl-tRNA synthetase family. ProS type 3 subfamily. Homodimer.

The protein resides in the cytoplasm. It catalyses the reaction tRNA(Pro) + L-proline + ATP = L-prolyl-tRNA(Pro) + AMP + diphosphate. Its function is as follows. Catalyzes the attachment of proline to tRNA(Pro) in a two-step reaction: proline is first activated by ATP to form Pro-AMP and then transferred to the acceptor end of tRNA(Pro). In Rhodopirellula baltica (strain DSM 10527 / NCIMB 13988 / SH1), this protein is Proline--tRNA ligase.